A 760-amino-acid chain; its full sequence is 5-methyltetrahydropteroyltriglutamate--homocysteine methyltransferase (760 aa).

Residues 17 to 20 (RELK) and K118 each bind 5-methyltetrahydropteroyltri-L-glutamate. Residues 434-436 (IGS) and E487 each bind L-homocysteine. L-methionine contacts are provided by residues 434-436 (IGS) and E487. 5-methyltetrahydropteroyltri-L-glutamate contacts are provided by residues 518–519 (RC) and W564. D602 lines the L-homocysteine pocket. L-methionine is bound at residue D602. E608 serves as a coordination point for 5-methyltetrahydropteroyltri-L-glutamate. Zn(2+) is bound by residues H644, C646, and E668. The Proton donor role is filled by H697. C729 is a binding site for Zn(2+).

This sequence belongs to the vitamin-B12 independent methionine synthase family. The cofactor is Zn(2+).

The catalysed reaction is 5-methyltetrahydropteroyltri-L-glutamate + L-homocysteine = tetrahydropteroyltri-L-glutamate + L-methionine. Its pathway is amino-acid biosynthesis; L-methionine biosynthesis via de novo pathway; L-methionine from L-homocysteine (MetE route): step 1/1. Functionally, catalyzes the transfer of a methyl group from 5-methyltetrahydrofolate to homocysteine resulting in methionine formation. This is 5-methyltetrahydropteroyltriglutamate--homocysteine methyltransferase from Buchnera aphidicola subsp. Cinara cedri (strain Cc).